The chain runs to 358 residues: Ion-translocating oxidoreductase complex subunit D (358 aa).

Transmembrane regions (helical) follow at residues 19–39 (IMLWVILAMMPAFFTQIYYFG), 41–61 (GVVLQSALAIGTAIIAEFIAI), 79–99 (LTALILAMAIPPYAPYWVIII), and 125–145 (IGYVILLISFPLQMTTWMPPI). At Thr186 the chain carries FMN phosphoryl threonine. A run of 5 helical transmembrane segments spans residues 220–240 (FAQGWWQINVAFLAGGIFLIL), 248–268 (IPVAMLVTFFCLATATAFTGF), 271–291 (LSAISQLVSGAMMFGAFFIAT), 297–317 (SITPRGKIIFGALVGLFVYLI), and 321–341 (GNYPDGVAFAILLSNICVPLI).

Belongs to the NqrB/RnfD family. In terms of assembly, the complex is composed of six subunits: RnfA, RnfB, RnfC, RnfD, RnfE and RnfG. FMN is required as a cofactor.

It localises to the cell inner membrane. Its function is as follows. Part of a membrane-bound complex that couples electron transfer with translocation of ions across the membrane. The sequence is that of Ion-translocating oxidoreductase complex subunit D from Haemophilus influenzae (strain PittGG).